Reading from the N-terminus, the 450-residue chain is Cytidylate cyclase (450 aa).

Residues 97 to 236 (VTMFVDIRKS…LPVDMTAKLQ (140 aa)) enclose the Guanylate cyclase domain. Phe-100 is an a ribonucleoside 5'-triphosphate binding site. Asp-102, Ile-103, and Asp-146 together coordinate Mn(2+). The AGS-C domain stretch occupies residues 318-450 (PNQFNFECFV…YRNIIGVYIK (133 aa)).

It belongs to the adenylyl cyclase class-4/guanylyl cyclase family. Pyrimidine cyclase subfamily. Homodimer. Mn(2+) is required as a cofactor.

It is found in the cytoplasm. The enzyme catalyses CTP = 3',5'-cyclic CMP + diphosphate. Its activity is regulated as follows. In E.coli strain MG1655 transformed with both genes cCMP appears between 15 and 30 minutes after infection with phage T5 (at protein level). No cCMP accumulates in uninfected cells. Its function is as follows. Pycsar (pyrimidine cyclase system for antiphage resistance) provides immunity against bacteriophage. The pyrimidine cyclase (PycC) synthesizes cyclic nucleotides in response to infection; these serve as specific second messenger signals. The signal activates the adjacent effector, leading to bacterial cell death and abortive phage infection. A clade E Pycsar system. Functionally, the pyrimidine cyclase gene of a two-gene Pycsar system, generates cyclic CMP (cCMP) from CTP in response to bacteriophage infection. Has little to no activity on ATP, GTP or UTP. Expression of this and adjacent effector EcPycTM (AC P0DV25) confers resistance to bacteriophage P1 and T5; expression of this gene alone does not confer resistance. When cells expressing the Pycsar system are infected by phage T5 at low multiplicity of infection (0.2 MOI) the culture survives, at 2.0 MOI bacteria enter growth arrest. The same cells enter growth arrest after exposure to 250 uM cCMP but not cUMP; thus the effector protein responds only to the cNMP produced by its cognate NTP cyclase. Some of the cells treated with cCMP have abnormal membrane protrusions. This chain is Cytidylate cyclase, found in Escherichia coli.